The sequence spans 466 residues: Glycosyl hydrolase family 109 protein (466 aa).

Residues 1–30 constitute a signal peptide (tat-type signal); sequence MENTRRSFLKKVSAAGIGAAGLAMAGNAGA. NAD(+) is bound by residues 59–60, Asp-81, 130–133, 151–152, and Asn-180; these read SR, WEWH, and EV. Substrate is bound at residue Tyr-209. An NAD(+)-binding site is contributed by 241–245; sequence AEAQW. Substrate is bound by residues Arg-246, 258 to 261, and Tyr-340; that span reads YPTH. NAD(+) is bound at residue Tyr-258.

It belongs to the Gfo/Idh/MocA family. Glycosyl hydrolase 109 subfamily. Requires NAD(+) as cofactor. Predicted to be exported by the Tat system. The position of the signal peptide cleavage has not been experimentally proven.

Glycosidase. The polypeptide is Glycosyl hydrolase family 109 protein (Parabacteroides distasonis (strain ATCC 8503 / DSM 20701 / CIP 104284 / JCM 5825 / NCTC 11152)).